The following is a 327-amino-acid chain: Biotin synthase (327 aa).

The 228-residue stretch at 52 to 279 (TKVQLSTLVS…ASYVRLSAGR (228 aa)) folds into the Radical SAM core domain. Positions 67, 71, and 74 each coordinate [4Fe-4S] cluster. 4 residues coordinate [2Fe-2S] cluster: C111, C142, C202, and R274.

The protein belongs to the radical SAM superfamily. Biotin synthase family. In terms of assembly, homodimer. It depends on [4Fe-4S] cluster as a cofactor. The cofactor is [2Fe-2S] cluster.

It carries out the reaction (4R,5S)-dethiobiotin + (sulfur carrier)-SH + 2 reduced [2Fe-2S]-[ferredoxin] + 2 S-adenosyl-L-methionine = (sulfur carrier)-H + biotin + 2 5'-deoxyadenosine + 2 L-methionine + 2 oxidized [2Fe-2S]-[ferredoxin]. It participates in cofactor biosynthesis; biotin biosynthesis; biotin from 7,8-diaminononanoate: step 2/2. In terms of biological role, catalyzes the conversion of dethiobiotin (DTB) to biotin by the insertion of a sulfur atom into dethiobiotin via a radical-based mechanism. This is Biotin synthase from Chromobacterium violaceum (strain ATCC 12472 / DSM 30191 / JCM 1249 / CCUG 213 / NBRC 12614 / NCIMB 9131 / NCTC 9757 / MK).